A 645-amino-acid chain; its full sequence is DNA mismatch repair protein MutL (645 aa).

Disordered stretches follow at residues 353-381 (RPEN…FGPQ) and 395-420 (QGEP…PTTG).

This sequence belongs to the DNA mismatch repair MutL/HexB family.

Functionally, this protein is involved in the repair of mismatches in DNA. It is required for dam-dependent methyl-directed DNA mismatch repair. May act as a 'molecular matchmaker', a protein that promotes the formation of a stable complex between two or more DNA-binding proteins in an ATP-dependent manner without itself being part of a final effector complex. The polypeptide is DNA mismatch repair protein MutL (Pseudomonas syringae pv. tomato (strain ATCC BAA-871 / DC3000)).